A 107-amino-acid polypeptide reads, in one-letter code: UPF0122 protein STH1464 (107 aa).

This sequence belongs to the UPF0122 family.

In terms of biological role, might take part in the signal recognition particle (SRP) pathway. This is inferred from the conservation of its genetic proximity to ftsY/ffh. May be a regulatory protein. This is UPF0122 protein STH1464 from Symbiobacterium thermophilum (strain DSM 24528 / JCM 14929 / IAM 14863 / T).